The sequence spans 381 residues: Homoserine O-succinyltransferase (381 aa).

The 316-residue stretch at 45-360 folds into the AB hydrolase-1 domain; sequence NAVLVCHALN…PHGHDAFLLD (316 aa). Ser151 acts as the Nucleophile in catalysis. Arg221 is a binding site for substrate. Residues Asp321 and His354 contribute to the active site. Asp355 contributes to the substrate binding site.

It belongs to the AB hydrolase superfamily. MetX family. In terms of assembly, homodimer.

Its subcellular location is the cytoplasm. The catalysed reaction is L-homoserine + succinyl-CoA = O-succinyl-L-homoserine + CoA. Its pathway is amino-acid biosynthesis; L-methionine biosynthesis via de novo pathway; O-succinyl-L-homoserine from L-homoserine: step 1/1. Its function is as follows. Transfers a succinyl group from succinyl-CoA to L-homoserine, forming succinyl-L-homoserine. This Paraburkholderia phytofirmans (strain DSM 17436 / LMG 22146 / PsJN) (Burkholderia phytofirmans) protein is Homoserine O-succinyltransferase.